The following is a 99-amino-acid chain: Putative membrane protein insertion efficiency factor (99 aa).

This sequence belongs to the UPF0161 family.

The protein resides in the cell membrane. In terms of biological role, could be involved in insertion of integral membrane proteins into the membrane. This chain is Putative membrane protein insertion efficiency factor, found in Corynebacterium glutamicum (strain ATCC 13032 / DSM 20300 / JCM 1318 / BCRC 11384 / CCUG 27702 / LMG 3730 / NBRC 12168 / NCIMB 10025 / NRRL B-2784 / 534).